Consider the following 54-residue polypeptide: Ribulose bisphosphate carboxylase large chain (54 aa).

Residues 1–2 (MS) constitute a propeptide that is removed on maturation. The residue at position 3 (Pro3) is an N-acetylproline. An N6,N6,N6-trimethyllysine modification is found at Lys14.

It belongs to the RuBisCO large chain family. Type I subfamily. Heterohexadecamer of 8 large chains and 8 small chains.

It is found in the plastid. It localises to the chloroplast. It carries out the reaction 2 (2R)-3-phosphoglycerate + 2 H(+) = D-ribulose 1,5-bisphosphate + CO2 + H2O. It catalyses the reaction D-ribulose 1,5-bisphosphate + O2 = 2-phosphoglycolate + (2R)-3-phosphoglycerate + 2 H(+). RuBisCO catalyzes two reactions: the carboxylation of D-ribulose 1,5-bisphosphate, the primary event in carbon dioxide fixation, as well as the oxidative fragmentation of the pentose substrate in the photorespiration process. Both reactions occur simultaneously and in competition at the same active site. In Icacina mannii, this protein is Ribulose bisphosphate carboxylase large chain (rbcL).